A 566-amino-acid polypeptide reads, in one-letter code: Oxygen-dependent choline dehydrogenase (566 aa).

Residue 7-36 coordinates FAD; sequence DYIICGAGSAGNVLATRLTEDPNVTVLLLE. Positions 183–203 are disordered; that stretch reads QQEGFGPMDRTVTPKGRRAST. His-474 (proton acceptor) is an active-site residue.

It belongs to the GMC oxidoreductase family. The cofactor is FAD.

The enzyme catalyses choline + A = betaine aldehyde + AH2. It carries out the reaction betaine aldehyde + NAD(+) + H2O = glycine betaine + NADH + 2 H(+). It functions in the pathway amine and polyamine biosynthesis; betaine biosynthesis via choline pathway; betaine aldehyde from choline (cytochrome c reductase route): step 1/1. Involved in the biosynthesis of the osmoprotectant glycine betaine. Catalyzes the oxidation of choline to betaine aldehyde and betaine aldehyde to glycine betaine at the same rate. The polypeptide is Oxygen-dependent choline dehydrogenase (Burkholderia ambifaria (strain ATCC BAA-244 / DSM 16087 / CCUG 44356 / LMG 19182 / AMMD) (Burkholderia cepacia (strain AMMD))).